A 193-amino-acid chain; its full sequence is Acyl carrier protein phosphodiesterase (193 aa).

Belongs to the AcpH family.

It catalyses the reaction holo-[ACP] + H2O = apo-[ACP] + (R)-4'-phosphopantetheine + H(+). In terms of biological role, converts holo-ACP to apo-ACP by hydrolytic cleavage of the phosphopantetheine prosthetic group from ACP. This Escherichia coli O6:K15:H31 (strain 536 / UPEC) protein is Acyl carrier protein phosphodiesterase.